Consider the following 496-residue polypeptide: Cyclin-dependent kinase 16 (496 aa).

The tract at residues Met1–Val97 is disordered. The residue at position 12 (Ser12) is a Phosphoserine; by BRSK2. Residues Ser36, Ser42, Ser64, Ser65, Ser78, Ser82, and Ser89 each carry the phosphoserine modification. Basic and acidic residues predominate over residues Ile69–Ser78. The span at Asp83 to Val93 shows a compositional bias: polar residues. Ser95 carries the post-translational modification Phosphoserine; by CDK5. A phosphoserine mark is found at Ser110, Ser119, Ser138, Ser146, Ser153, and Ser155. One can recognise a Protein kinase domain in the interval Tyr165–Phe446. Residues Leu171–Val179 and Lys194 each bind ATP. Thr175 is subject to Phosphothreonine. Asp286 serves as the catalytic Proton acceptor. Thr380 is subject to Phosphothreonine. Ser391, Ser478, and Ser480 each carry phosphoserine.

The protein belongs to the protein kinase superfamily. CMGC Ser/Thr protein kinase family. CDC2/CDKX subfamily. In terms of assembly, found in a complex containing CABLES1, CDK17 and TDRD7. Interacts with BRSK2. Identified in a complex with NSF, syntaxin-1, synaptotagmin, SYN1, SYP and CDK5R1. Interacts with YWHAH, YWHAQ and YWHAZ. Interacts with CCNY; this interaction increases the CDK16 kinase activity. Interacts with CCNYL1; this interaction mutually increases the stability of CDK16 and CCNYL1 and increases the kinase activity of CDK16. Interacts with NSF. Phosphorylation of CDK16 is essential for the binding of CCNY, but also essential for the regulation of CDK16 kinase activity. Phosphorylation of CDK16 is essential for the binding of CCNYl1, but also essential for the regulation of CDK16 kinase activity. Ser-146 and Ser-153 are the most critical sites for the binding of CCNYL1 and for modulating CDK16 kinase activity. Phosphorylation at Ser-153 inhibits kinase activity. Detected in pancreas islets (at protein level). Detected in brain and pancreas.

Its subcellular location is the cytoplasm. It localises to the cytoplasmic vesicle. The protein localises to the secretory vesicle. It is found in the cell membrane. The protein resides in the synapse. Its subcellular location is the synaptosome. The catalysed reaction is L-seryl-[protein] + ATP = O-phospho-L-seryl-[protein] + ADP + H(+). It carries out the reaction L-threonyl-[protein] + ATP = O-phospho-L-threonyl-[protein] + ADP + H(+). In terms of biological role, protein kinase that plays a role in vesicle-mediated transport processes and exocytosis. Regulates GH1 release by brain neurons. Phosphorylates NSF, and thereby regulates NSF oligomerization. Required for normal spermatogenesis. Regulates neuron differentiation and dendrite development. Plays a role in the regulation of insulin secretion in response to changes in blood glucose levels. Can phosphorylate CCNY at 'Ser-336' (in vitro). The sequence is that of Cyclin-dependent kinase 16 (CDK16) from Homo sapiens (Human).